The following is a 95-amino-acid chain: Alpha-bungarotoxin isoform V31 (95 aa).

The N-terminal stretch at 1–21 is a signal peptide; sequence MKTLLLTLVVVTIVCLDLGYT. Disulfide bonds link Cys-24–Cys-44, Cys-37–Cys-65, Cys-50–Cys-54, Cys-69–Cys-80, and Cys-81–Cys-86.

It belongs to the three-finger toxin family. Long-chain subfamily. Type II alpha-neurotoxin sub-subfamily. Monomer in solution, homodimer in crystal state. As to expression, expressed by the venom gland.

The protein localises to the secreted. In terms of biological role, binds with high affinity to muscular (alpha-1/CHRNA1) and neuronal (alpha-7/CHRNA7) nicotinic acetylcholine receptor (nAChR) and inhibits acetylcholine from binding to the receptor, thereby impairing neuromuscular and neuronal transmission. The sequence is that of Alpha-bungarotoxin isoform V31 from Bungarus multicinctus (Many-banded krait).